Here is a 219-residue protein sequence, read N- to C-terminus: Chloramphenicol acetyltransferase (219 aa).

Residue His190 is the Proton acceptor of the active site.

The protein belongs to the chloramphenicol acetyltransferase family. In terms of assembly, homotrimer.

It catalyses the reaction chloramphenicol + acetyl-CoA = chloramphenicol 3-acetate + CoA. This enzyme is an effector of chloramphenicol resistance in bacteria. The polypeptide is Chloramphenicol acetyltransferase (catQ) (Clostridium perfringens).